The sequence spans 603 residues: MNTFICSALICLSWLPGFIQARVLTKKLTITYAKGAPDGIERDMIFINGQFPGPDLIFDEGDDVVINVVNDMPFNTTVHWHGLLMQGTPWSDGVPGLTQKPIEPGESFVYRFKAEPAGTYWYHSHSRATLLDGLYGALWIRPKENVPMPFTMISNSSDDLSAMERAAKNPQLLIVSDWSNFTSWQYIQGLVASELDIFCVDSILLNGKGSSYCPGQRLLESELSAYMNYAFGGANITDKGCFPFVESTEGPYLPGNQSAIPDHMWKDCVLGNGSNETIYVDPEEKWVSLNIVMASTMKSVVFSIDEHDLWLYELDGQLIEPIKYQWVTMLPSKRYSVLVKLNKTPGDYTIRLPDQGFSQIISGFATFSYKGGQDIGQTTPWVTYGGQNASDQGNGSGLTDLLPAPFPALRPRNTSDVFFVYNLYRWNAAYTWSLTGAAAMPVDDWAYQPLLYNPNSTAAHDKSLVIRTKYGQWVDLILQVGSKPDERQEINHVIHKHSSRAWQVGSGSGIWNYTSVDEAATLHPELFNFENPPYMDVFATSFEGPSWLIMRYQVTNPGPWLLHCHSEIHLAGGMAGVIMDGVDRWPTIPPAYAPNATGHYPLV.

A signal peptide spans M1 to A21. The Plastocyanin-like 1 domain maps to I30 to E144. N75 carries an N-linked (GlcNAc...) asparagine glycan. Cu cation contacts are provided by H79, H81, H123, and H125. Residues N155, N180, N235, N256, N272, N275, N388, N394, N413, and N455 are each glycosylated (N-linked (GlcNAc...) asparagine). The Plastocyanin-like 2 domain occupies L173–P353. The Plastocyanin-like 3 domain occupies L450–G581. H495 provides a ligand contact to Cu cation. N512 and N595 each carry an N-linked (GlcNAc...) asparagine glycan.

This sequence belongs to the multicopper oxidase family.

The enzyme catalyses 4 monapinone A + O2 = 2 dinapinone A + 2 H2O. The catalysed reaction is 4 monapinone E + O2 = 2 dinapinone E + 2 H2O. It participates in secondary metabolite biosynthesis. Multicopper oxidase; part of the gene cluster that mediates the biosynthesis of dinapinones DPA1 (or (M)-DPA) and DPA2 (or (P)-DPA), biaryl dihydronaphthopyranones that act in concert as inhibitors of triacylglycerol accumulation in mammalian cells. The first step in the pathway corresponds to the biosynthesis of dihydroxy-decanoyl-CoA by the fungal type I fatty acid synthase (formed by ORF4 and ORF5). The cluster-specific polyketide synthase (ORF7) then accepts and extends dihydroxy-decanoyl-CoA with 6 malonyl-CoA moieties and cyclizes the molecule to produce a putative polyhydroxynaphthopyranone intermediate, which is further methylated by the cluster-specific methyltransferase (ORF1) at 7-OH to produce monapinone A (MPA). MCE catalyzes the regioselective biaryl coupling of monapinone A (MPA) at the 8,8'-positions to afford dimeric atropisomers DPA1 and DPA2 in a ratio of approximately 1:2.5. Monapinone E (MPE) also appears to be a substrate for MCE and provides the atropisomers dinapinones DPE1 (or (M)-DPE) and DPE2 (or (P)-DPE). The protein is Multicopper oxidase MCE of Talaromyces pinophilus (Penicillium pinophilum).